Consider the following 333-residue polypeptide: Probable malate dehydrogenase 3 (333 aa).

12-18 (GAAGQIA) is an NAD(+) binding site. Substrate is bound by residues arginine 93 and arginine 99. Residues asparagine 106, glutamine 113, and 130–132 (VGN) contribute to the NAD(+) site. Positions 132 and 163 each coordinate substrate. The active-site Proton acceptor is the histidine 188.

The protein belongs to the LDH/MDH superfamily. MDH type 2 family. Homodimer.

The catalysed reaction is (S)-malate + NAD(+) = oxaloacetate + NADH + H(+). In terms of biological role, catalyzes the reversible oxidation of malate to oxaloacetate. The polypeptide is Probable malate dehydrogenase 3 (mdhC) (Dictyostelium discoideum (Social amoeba)).